We begin with the raw amino-acid sequence, 1448 residues long: Probable serine/threonine-protein kinase irlB (1448 aa).

Residues 412–423 (DDDDYDDYDDDD) show a composition bias toward acidic residues. The disordered stretch occupies residues 412 to 446 (DDDDYDDYDDDDDHHSGCNNNNNNNNDGDHNEDEN). The segment covering 428–437 (GCNNNNNNNN) has biased composition (low complexity). 3 coiled-coil regions span residues 666-817 (AESE…EIQN), 887-921 (EIQL…SNMK), and 974-1016 (ENNK…QDED). The disordered stretch occupies residues 975 to 1008 (NNKKQNLINDNNNNNNNNNNNNNNNNNNNNNNKL). Residues 978–1008 (KQNLINDNNNNNNNNNNNNNNNNNNNNNNKL) are compositionally biased toward low complexity. The Protein kinase domain occupies 1027-1293 (RNESNILGRG…IQNVLNHPLF (267 aa)). Residues 1033-1041 (LGRGSNGTL) and Lys-1056 contribute to the ATP site. The active-site Proton acceptor is Asp-1151. The 153-residue stretch at 1296 to 1448 (LEKKIQFIDA…TIDYLFNFYN (153 aa)) folds into the KEN domain.

This sequence belongs to the protein kinase superfamily. Ser/Thr protein kinase family.

The enzyme catalyses L-seryl-[protein] + ATP = O-phospho-L-seryl-[protein] + ADP + H(+). The catalysed reaction is L-threonyl-[protein] + ATP = O-phospho-L-threonyl-[protein] + ADP + H(+). In Dictyostelium discoideum (Social amoeba), this protein is Probable serine/threonine-protein kinase irlB (irlB-1).